Consider the following 77-residue polypeptide: Exodeoxyribonuclease 7 small subunit (77 aa).

This sequence belongs to the XseB family. In terms of assembly, heterooligomer composed of large and small subunits.

Its subcellular location is the cytoplasm. It catalyses the reaction Exonucleolytic cleavage in either 5'- to 3'- or 3'- to 5'-direction to yield nucleoside 5'-phosphates.. In terms of biological role, bidirectionally degrades single-stranded DNA into large acid-insoluble oligonucleotides, which are then degraded further into small acid-soluble oligonucleotides. This chain is Exodeoxyribonuclease 7 small subunit, found in Clostridium acetobutylicum (strain ATCC 824 / DSM 792 / JCM 1419 / IAM 19013 / LMG 5710 / NBRC 13948 / NRRL B-527 / VKM B-1787 / 2291 / W).